Reading from the N-terminus, the 311-residue chain is Formimidoylglutamase (311 aa).

Histidine 122, aspartate 151, histidine 153, aspartate 155, cysteine 242, and aspartate 244 together coordinate Mn(2+).

The protein belongs to the arginase family. Homodimer. It depends on Mn(2+) as a cofactor.

It carries out the reaction N-formimidoyl-L-glutamate + H2O = formamide + L-glutamate. It functions in the pathway amino-acid degradation; L-histidine degradation into L-glutamate; L-glutamate from N-formimidoyl-L-glutamate (hydrolase route): step 1/1. In terms of biological role, catalyzes the conversion of N-formimidoyl-L-glutamate to L-glutamate and formamide. The chain is Formimidoylglutamase from Pseudomonas aeruginosa (strain ATCC 15692 / DSM 22644 / CIP 104116 / JCM 14847 / LMG 12228 / 1C / PRS 101 / PAO1).